A 559-amino-acid chain; its full sequence is Chaperonin GroEL 1 (559 aa).

ATP-binding positions include 29–32, 86–90, glycine 413, 476–478, and aspartate 492; these read TIGP, DGTTT, and NAL. The disordered stretch occupies residues 521–541; that stretch reads KPEPPAPAPAGDGDPMGGMGG.

This sequence belongs to the chaperonin (HSP60) family. Forms a cylinder of 14 subunits composed of two heptameric rings stacked back-to-back. Interacts with the co-chaperonin GroES.

The protein resides in the cytoplasm. It catalyses the reaction ATP + H2O + a folded polypeptide = ADP + phosphate + an unfolded polypeptide.. Together with its co-chaperonin GroES, plays an essential role in assisting protein folding. The GroEL-GroES system forms a nano-cage that allows encapsulation of the non-native substrate proteins and provides a physical environment optimized to promote and accelerate protein folding. The sequence is that of Chaperonin GroEL 1 from Synechococcus sp. (strain CC9605).